The sequence spans 366 residues: Fe-S cluster assembly protein DRE2 (366 aa).

The tract at residues 8–167 (AQGSGRFLLL…KPDFGAQQAV (160 aa)) is N-terminal SAM-like domain. Residues 100–136 (RNRDNQIWGSGSDSAAGLGSSDGGGGGGGGEKKSSSE) form a disordered region. Residues 108–118 (GSGSDSAAGLG) show a composition bias toward low complexity. Residues 119–128 (SSDGGGGGGG) are compositionally biased toward gly residues. The segment at 168 to 258 (PLKLGRKKNL…EEELLGEFDM (91 aa)) is linker. [2Fe-2S] cluster is bound by residues cysteine 268, cysteine 279, cysteine 282, and cysteine 284. A fe-S binding site A region spans residues 268 to 284 (CRPKAGKRRRACKDCTC). Residues cysteine 329, cysteine 332, cysteine 340, and cysteine 343 each coordinate [4Fe-4S] cluster. 2 short sequence motifs (cx2C motif) span residues 329-332 (CGNC) and 340-343 (CDGC). The interval 329–343 (CGNCALGDAFRCDGC) is fe-S binding site B.

The protein belongs to the anamorsin family. As to quaternary structure, monomer. Interacts with TAH18. Interacts with MIA40. [2Fe-2S] cluster serves as cofactor. The cofactor is [4Fe-4S] cluster.

It is found in the cytoplasm. It localises to the mitochondrion intermembrane space. Functionally, component of the cytosolic iron-sulfur (Fe-S) protein assembly (CIA) machinery required for the maturation of extramitochondrial Fe-S proteins. Part of an electron transfer chain functioning in an early step of cytosolic Fe-S biogenesis, facilitating the de novo assembly of a [4Fe-4S] cluster on the scaffold complex CFD1-NBP35. Electrons are transferred to DRE2 from NADPH via the FAD- and FMN-containing protein TAH18. TAH18-DRE2 are also required for the assembly of the diferric tyrosyl radical cofactor of ribonucleotide reductase (RNR), probably by providing electrons for reduction during radical cofactor maturation in the catalytic small subunit RNR2. This chain is Fe-S cluster assembly protein DRE2, found in Paracoccidioides lutzii (strain ATCC MYA-826 / Pb01) (Paracoccidioides brasiliensis).